A 383-amino-acid polypeptide reads, in one-letter code: Ribosomal RNA large subunit methyltransferase G (383 aa).

It belongs to the methyltransferase superfamily. RlmG family.

Its subcellular location is the cytoplasm. The enzyme catalyses guanosine(1835) in 23S rRNA + S-adenosyl-L-methionine = N(2)-methylguanosine(1835) in 23S rRNA + S-adenosyl-L-homocysteine + H(+). In terms of biological role, specifically methylates the guanine in position 1835 (m2G1835) of 23S rRNA. In Vibrio atlanticus (strain LGP32) (Vibrio splendidus (strain Mel32)), this protein is Ribosomal RNA large subunit methyltransferase G.